Consider the following 414-residue polypeptide: MFLYSFVFLMLLGLSSAQTESATSPDEVETEPTMSTDQPETSPSMSTETEPTTETPPVTTPPPPDSLSVICTNEKMEVFLDHAKHDNLDLDKVTLKDANCKASGTLNATHLWMDVPFDSCMTNHSTDGDTITYQNSLVAETRASAGSSLISREFQAEFPFKCTYPRSAVLSVVAFSPRERIVYTKTAEFGNFTFTMDMYKTDKYETPYDSFPVRLDLDDPMFLEVKVSSNDSKLVLIPLKCWATPSSDLQDDKYYTFIENGCGKADDPSLVFNYGESNVQRFKIGAFRFIGESLNSNVYLHCDVEACRKGDSDSRCAKGCETSRRRRRSSLASSAGTEQTVTLGPMKISEKAEVGAQEAVSSLTIFAAVAGVLGVIVLFLAVALVMLYKRYRSPQSATRVVYTKTANEEGKLLV.

An N-terminal signal peptide occupies residues 1–17 (MFLYSFVFLMLLGLSSA). The disordered stretch occupies residues 18-65 (QTESATSPDEVETEPTMSTDQPETSPSMSTETEPTTETPPVTTPPPPD). Topologically, residues 18–364 (QTESATSPDE…GAQEAVSSLT (347 aa)) are extracellular. Over residues 39 to 57 (PETSPSMSTETEPTTETPP) the composition is skewed to low complexity. The ZP domain occupies 70–323 (ICTNEKMEVF…SRCAKGCETS (254 aa)). Cysteine 241 and cysteine 302 are oxidised to a cystine. Residues 365 to 385 (IFAAVAGVLGVIVLFLAVALV) traverse the membrane as a helical segment. Residues 386-414 (MLYKRYRSPQSATRVVYTKTANEEGKLLV) lie on the Cytoplasmic side of the membrane.

In terms of tissue distribution, component of the acid-insoluble and acid-soluble organic matrix of the aragonitic skeleton (at protein level).

The protein localises to the membrane. This is ZP domain-containing protein from Acropora millepora (Staghorn coral).